A 59-amino-acid chain; its full sequence is Large ribosomal subunit protein uL30 (59 aa).

Belongs to the universal ribosomal protein uL30 family. As to quaternary structure, part of the 50S ribosomal subunit.

This is Large ribosomal subunit protein uL30 from Psychrobacter arcticus (strain DSM 17307 / VKM B-2377 / 273-4).